We begin with the raw amino-acid sequence, 72 residues long: Mitotic-spindle organizing protein 1 (72 aa).

Belongs to the MOZART1 family. As to quaternary structure, part of the gamma-tubulin complex.

It is found in the cytoplasm. The protein localises to the cytoskeleton. It localises to the microtubule organizing center. The protein resides in the spindle pole body. Its function is as follows. Required for gamma-tubulin complex recruitment to the microtubule organizing center (MTOC). This chain is Mitotic-spindle organizing protein 1, found in Coccidioides immitis (strain RS) (Valley fever fungus).